The following is a 466-amino-acid chain: Ribulose bisphosphate carboxylase large chain (466 aa).

An N6,N6,N6-trimethyllysine modification is found at Lys-5. Residues Asn-114 and Thr-164 each contribute to the substrate site. Lys-166 serves as the catalytic Proton acceptor. Lys-168 provides a ligand contact to substrate. Residues Lys-192, Asp-194, and Glu-195 each contribute to the Mg(2+) site. An N6-carboxylysine modification is found at Lys-192. His-285 (proton acceptor) is an active-site residue. Residues Arg-286, His-318, and Ser-370 each contribute to the substrate site.

It belongs to the RuBisCO large chain family. Type I subfamily. In terms of assembly, heterohexadecamer of 8 large chains and 8 small chains; disulfide-linked. The disulfide link is formed within the large subunit homodimers. Mg(2+) is required as a cofactor. In terms of processing, the disulfide bond which can form in the large chain dimeric partners within the hexadecamer appears to be associated with oxidative stress and protein turnover.

The protein resides in the plastid. It localises to the chloroplast. It catalyses the reaction 2 (2R)-3-phosphoglycerate + 2 H(+) = D-ribulose 1,5-bisphosphate + CO2 + H2O. The catalysed reaction is D-ribulose 1,5-bisphosphate + O2 = 2-phosphoglycolate + (2R)-3-phosphoglycerate + 2 H(+). Its function is as follows. RuBisCO catalyzes two reactions: the carboxylation of D-ribulose 1,5-bisphosphate, the primary event in carbon dioxide fixation, as well as the oxidative fragmentation of the pentose substrate in the photorespiration process. Both reactions occur simultaneously and in competition at the same active site. In Cucurbita pepo (Vegetable marrow), this protein is Ribulose bisphosphate carboxylase large chain.